Consider the following 129-residue polypeptide: Glycine cleavage system H protein (129 aa).

A Lipoyl-binding domain is found at 24-106 (TFTVGISEHA…YGDGWLFRIK (83 aa)). K65 is modified (N6-lipoyllysine).

This sequence belongs to the GcvH family. As to quaternary structure, the glycine cleavage system is composed of four proteins: P, T, L and H. It depends on (R)-lipoate as a cofactor.

The glycine cleavage system catalyzes the degradation of glycine. The H protein shuttles the methylamine group of glycine from the P protein to the T protein. The chain is Glycine cleavage system H protein from Idiomarina loihiensis (strain ATCC BAA-735 / DSM 15497 / L2-TR).